A 220-amino-acid chain; its full sequence is ATP phosphoribosyltransferase (220 aa).

Belongs to the ATP phosphoribosyltransferase family. Short subfamily. As to quaternary structure, heteromultimer composed of HisG and HisZ subunits.

The protein resides in the cytoplasm. The catalysed reaction is 1-(5-phospho-beta-D-ribosyl)-ATP + diphosphate = 5-phospho-alpha-D-ribose 1-diphosphate + ATP. It participates in amino-acid biosynthesis; L-histidine biosynthesis; L-histidine from 5-phospho-alpha-D-ribose 1-diphosphate: step 1/9. Its function is as follows. Catalyzes the condensation of ATP and 5-phosphoribose 1-diphosphate to form N'-(5'-phosphoribosyl)-ATP (PR-ATP). Has a crucial role in the pathway because the rate of histidine biosynthesis seems to be controlled primarily by regulation of HisG enzymatic activity. The sequence is that of ATP phosphoribosyltransferase from Prochlorococcus marinus (strain NATL1A).